The chain runs to 354 residues: Uroporphyrinogen decarboxylase (354 aa).

Substrate-binding positions include 27 to 31 (RQAGR), Asp77, Tyr154, Thr209, and His327.

This sequence belongs to the uroporphyrinogen decarboxylase family. Homodimer.

Its subcellular location is the cytoplasm. It carries out the reaction uroporphyrinogen III + 4 H(+) = coproporphyrinogen III + 4 CO2. Its pathway is porphyrin-containing compound metabolism; protoporphyrin-IX biosynthesis; coproporphyrinogen-III from 5-aminolevulinate: step 4/4. In terms of biological role, catalyzes the decarboxylation of four acetate groups of uroporphyrinogen-III to yield coproporphyrinogen-III. The sequence is that of Uroporphyrinogen decarboxylase from Pseudomonas putida (strain ATCC 700007 / DSM 6899 / JCM 31910 / BCRC 17059 / LMG 24140 / F1).